The primary structure comprises 1051 residues: Putative helicase/primase complex protein (1051 aa).

The protein belongs to the asfivirus F1055L family.

Functionally, may be involved in DNA replication. This chain is Putative helicase/primase complex protein, found in Ornithodoros (relapsing fever ticks).